The chain runs to 227 residues: Orotidine 5'-phosphate decarboxylase (227 aa).

Substrate-binding positions include aspartate 8, lysine 30, 58–67 (DLKVHDIPNT), threonine 117, arginine 177, glutamine 186, glycine 206, and arginine 207. The active-site Proton donor is lysine 60.

It belongs to the OMP decarboxylase family. Type 1 subfamily. Homodimer.

It catalyses the reaction orotidine 5'-phosphate + H(+) = UMP + CO2. It functions in the pathway pyrimidine metabolism; UMP biosynthesis via de novo pathway; UMP from orotate: step 2/2. In terms of biological role, catalyzes the decarboxylation of orotidine 5'-monophosphate (OMP) to uridine 5'-monophosphate (UMP). The polypeptide is Orotidine 5'-phosphate decarboxylase (Campylobacter fetus subsp. fetus (strain 82-40)).